Reading from the N-terminus, the 91-residue chain is Small ribosomal subunit protein uS19 (91 aa).

It belongs to the universal ribosomal protein uS19 family.

Functionally, protein S19 forms a complex with S13 that binds strongly to the 16S ribosomal RNA. This is Small ribosomal subunit protein uS19 from Marinobacter nauticus (strain ATCC 700491 / DSM 11845 / VT8) (Marinobacter aquaeolei).